The primary structure comprises 947 residues: Bifunctional glutamine synthetase adenylyltransferase/adenylyl-removing enzyme (947 aa).

Residues 1 to 440 (MTPLSSPLSQ…VFNELIGDDE (440 aa)) form an adenylyl removase region. The segment at 450 to 947 (SEPWREVWQD…ASWRKWLVAV (498 aa)) is adenylyl transferase.

This sequence belongs to the GlnE family. Mg(2+) is required as a cofactor.

It catalyses the reaction [glutamine synthetase]-O(4)-(5'-adenylyl)-L-tyrosine + phosphate = [glutamine synthetase]-L-tyrosine + ADP. The enzyme catalyses [glutamine synthetase]-L-tyrosine + ATP = [glutamine synthetase]-O(4)-(5'-adenylyl)-L-tyrosine + diphosphate. In terms of biological role, involved in the regulation of glutamine synthetase GlnA, a key enzyme in the process to assimilate ammonia. When cellular nitrogen levels are high, the C-terminal adenylyl transferase (AT) inactivates GlnA by covalent transfer of an adenylyl group from ATP to specific tyrosine residue of GlnA, thus reducing its activity. Conversely, when nitrogen levels are low, the N-terminal adenylyl removase (AR) activates GlnA by removing the adenylyl group by phosphorolysis, increasing its activity. The regulatory region of GlnE binds the signal transduction protein PII (GlnB) which indicates the nitrogen status of the cell. The protein is Bifunctional glutamine synthetase adenylyltransferase/adenylyl-removing enzyme of Salmonella schwarzengrund (strain CVM19633).